The following is a 423-amino-acid chain: Pseudouridylate synthase 1 homolog (423 aa).

The tract at residues 32 to 75 (AGNKVPPALASHQPDRKGRGGWVWEETEHPAKRVKGGEDEEPPR) is disordered. The span at 57–68 (ETEHPAKRVKGG) shows a compositional bias: basic and acidic residues. Asp-142 serves as the catalytic Nucleophile. The disordered stretch occupies residues 403–423 (ADTGAKVPSSLEGSEGDGDTD). A phosphoserine mark is found at Ser-411 and Ser-416. Thr-422 is subject to Phosphothreonine.

It belongs to the tRNA pseudouridine synthase TruA family. As to quaternary structure, monomer. Forms a complex with RARG and the SRA1 RNA in the nucleus.

Its subcellular location is the nucleus. It is found in the cytoplasm. It localises to the mitochondrion. The enzyme catalyses a uridine in tRNA = a pseudouridine in tRNA. It catalyses the reaction uridine(38/39/40) in tRNA = pseudouridine(38/39/40) in tRNA. The catalysed reaction is a uridine in mRNA = a pseudouridine in mRNA. Functionally, pseudouridylate synthase that catalyzes pseudouridylation of tRNAs and mRNAs. Acts on positions 27/28 in the anticodon stem and also positions 34 and 36 in the anticodon of an intron containing tRNA. Also catalyzes pseudouridylation of mRNAs: mediates pseudouridylation of mRNAs with the consensus sequence 5'-UGUAG-3'. Acts as a regulator of pre-mRNA splicing by mediating pseudouridylation of pre-mRNAs at locations associated with alternatively spliced regions. Pseudouridylation of pre-mRNAs near splice sites directly regulates mRNA splicing and mRNA 3'-end processing. Involved in regulation of nuclear receptor activity through pseudouridylation of SRA1 mRNA. Does not form pseudouridine when expressed in vitro. The protein is Pseudouridylate synthase 1 homolog of Mus musculus (Mouse).